Consider the following 1435-residue polypeptide: Gag-Pol polyprotein (1435 aa).

G2 carries N-myristoyl glycine; by host lipidation. The segment at 7 to 31 is interaction with Gp41; that stretch reads VLSGGKLDSWEKIRLRPGGRKKYKL. The interaction with host CALM1 stretch occupies residues 8–43; the sequence is LSGGKLDSWEKIRLRPGGRKKYKLKHIVWASRELGR. Positions 12 to 19 are interaction with host AP3D1; that stretch reads KLDSWEKI. The interval 14-33 is interaction with membrane phosphatidylinositol 4,5-bisphosphate and RNA; that stretch reads DSWEKIRLRPGGRKKYKLKH. The short motif at 16 to 22 is the Nuclear export signal element; the sequence is WEKIRLR. The short motif at 26 to 32 is the Nuclear localization signal element; sequence RKKYKLK. The interval 72–76 is interaction with membrane phosphatidylinositol 4,5-bisphosphate; it reads EELRS. Positions 107-126 are disordered; sequence QKNSQQEIQQAAKNEGNSNP. Over residues 108 to 126 the composition is skewed to polar residues; that stretch reads KNSQQEIQQAAKNEGNSNP. Y131 bears the Phosphotyrosine; by host mark. Residues 188–226 form an interaction with human PPIA/CYPA and NUP153 region; that stretch reads NTVGGHQAAMQMLKDTINDEAAEWDRIHPQQAGPIPPGQ. Residues 276–362 form a dimerization/Multimerization of capsid protein p24 region; sequence YSPVSILDIR…GGPSHKARVL (87 aa). 2 CCHC-type zinc fingers span residues 391-408 and 412-429; these read IKCF…NCRA and KGCW…ECTE. A disordered region spans residues 444 to 478; the sequence is GEARKLSPEQDRANSPTSRELRIRRGDSPLPEAGA. Residues 445-455 are compositionally biased toward basic and acidic residues; the sequence is EARKLSPEQDR. The interval 489–493 is dimerization of protease; it reads PQITL. In terms of domain architecture, Peptidase A2 spans 508 to 577; sequence IEALLDTGAD…TPINIIGRNM (70 aa). The For protease activity; shared with dimeric partner role is filled by D513. Dimerization of protease regions lie at residues 537–543 and 576–588; these read GIGGFIK and NMLT…LNFP. Residues 631-821 form the Reverse transcriptase domain; the sequence is EGKISKIGPE…PPFLWMGYEL (191 aa). 3 residues coordinate Mg(2+): D697, D772, and D773. The segment at 814–822 is RT 'primer grip'; the sequence is FLWMGYELH. The Tryptophan repeat motif signature appears at 985 to 1001; it reads WEVWWTEYWQAAWIPEW. Residues 1021-1144 form the RNase H type-1 domain; the sequence is IPGAETYYVD…VDKLVSSGIR (124 aa). D1030, E1065, D1085, and D1136 together coordinate Mg(2+). The segment at 1150 to 1191 adopts an Integrase-type zinc-finger fold; the sequence is DGIDKAQEEHERYHSNWRAMASDFNLPPVVAKEIVASCDKCQ. The Zn(2+) site is built by H1159, H1163, C1187, and C1190. Residues 1201 to 1351 enclose the Integrase catalytic domain; the sequence is VDCSPGIWQL…SAGERIIDII (151 aa). The Mg(2+) site is built by D1211, D1263, and E1299. Residues 1370–1417 constitute a DNA-binding region (integrase-type); that stretch reads FRVYYRDSRDPIWKGPAKLLWKGEGAVVIQDNNEIKVVPRRKAKILKD.

In terms of assembly, homotrimer; further assembles as hexamers of trimers. Interacts with gp41 (via C-terminus). Interacts with host CALM1; this interaction induces a conformational change in the Matrix protein, triggering exposure of the myristate group. Interacts with host AP3D1; this interaction allows the polyprotein trafficking to multivesicular bodies during virus assembly. Part of the pre-integration complex (PIC) which is composed of viral genome, matrix protein, Vpr and integrase. As to quaternary structure, homodimer; the homodimer further multimerizes as homohexamers or homopentamers. Interacts with human PPIA/CYPA; This interaction stabilizes the capsid. Interacts with human NUP153. Interacts with host PDZD8; this interaction stabilizes the capsid. Interacts with monkey TRIM5; this interaction destabilizes the capsid. Homodimer, whose active site consists of two apposed aspartic acid residues. In terms of assembly, heterodimer of p66 RT and p51 RT (RT p66/p51). Heterodimerization of RT is essential for DNA polymerase activity. The overall folding of the subdomains is similar in p66 RT and p51 RT but the spatial arrangements of the subdomains are dramatically different. As to quaternary structure, homotetramer; may further associate as a homohexadecamer. Part of the pre-integration complex (PIC) which is composed of viral genome, matrix protein, Vpr and integrase. Interacts with human SMARCB1/INI1 and human PSIP1/LEDGF isoform 1. Interacts with human KPNA3; this interaction might play a role in nuclear import of the pre-integration complex. Interacts with human NUP153; this interaction might play a role in nuclear import of the pre-integration complex. Mg(2+) serves as cofactor. In terms of processing, specific enzymatic cleavages by the viral protease yield mature proteins. The protease is released by autocatalytic cleavage. The polyprotein is cleaved during and after budding, this process is termed maturation. Proteolytic cleavage of p66 RT removes the RNase H domain to yield the p51 RT subunit. Nucleocapsid protein p7 might be further cleaved after virus entry. Tyrosine phosphorylated presumably in the virion by a host kinase. Phosphorylation is apparently not a major regulator of membrane association. Post-translationally, phosphorylated possibly by host MAPK1; this phosphorylation is necessary for Pin1-mediated virion uncoating. In terms of processing, methylated by host PRMT6, impairing its function by reducing RNA annealing and the initiation of reverse transcription.

Its subcellular location is the host cell membrane. It is found in the host endosome. The protein localises to the host multivesicular body. It localises to the virion membrane. The protein resides in the host nucleus. Its subcellular location is the host cytoplasm. It is found in the virion. The catalysed reaction is Specific for a P1 residue that is hydrophobic, and P1' variable, but often Pro.. The enzyme catalyses Endohydrolysis of RNA in RNA/DNA hybrids. Three different cleavage modes: 1. sequence-specific internal cleavage of RNA. Human immunodeficiency virus type 1 and Moloney murine leukemia virus enzymes prefer to cleave the RNA strand one nucleotide away from the RNA-DNA junction. 2. RNA 5'-end directed cleavage 13-19 nucleotides from the RNA end. 3. DNA 3'-end directed cleavage 15-20 nucleotides away from the primer terminus.. It carries out the reaction 3'-end directed exonucleolytic cleavage of viral RNA-DNA hybrid.. It catalyses the reaction DNA(n) + a 2'-deoxyribonucleoside 5'-triphosphate = DNA(n+1) + diphosphate. Protease: The viral protease is inhibited by many synthetic protease inhibitors (PIs), such as amprenavir, atazanavir, indinavir, loprinavir, nelfinavir, ritonavir and saquinavir. Use of protease inhibitors in tritherapy regimens permit more ambitious therapeutic strategies. Reverse transcriptase/ribonuclease H: RT can be inhibited either by nucleoside RT inhibitors (NRTIs) or by non nucleoside RT inhibitors (NNRTIs). NRTIs act as chain terminators, whereas NNRTIs inhibit DNA polymerization by binding a small hydrophobic pocket near the RT active site and inducing an allosteric change in this region. Classical NRTIs are abacavir, adefovir (PMEA), didanosine (ddI), lamivudine (3TC), stavudine (d4T), tenofovir (PMPA), zalcitabine (ddC), and zidovudine (AZT). Classical NNRTIs are atevirdine (BHAP U-87201E), delavirdine, efavirenz (DMP-266), emivirine (I-EBU), and nevirapine (BI-RG-587). The tritherapies used as a basic effective treatment of AIDS associate two NRTIs and one NNRTI. In terms of biological role, mediates, with Gag polyprotein, the essential events in virion assembly, including binding the plasma membrane, making the protein-protein interactions necessary to create spherical particles, recruiting the viral Env proteins, and packaging the genomic RNA via direct interactions with the RNA packaging sequence (Psi). Gag-Pol polyprotein may regulate its own translation, by the binding genomic RNA in the 5'-UTR. At low concentration, the polyprotein would promote translation, whereas at high concentration, the polyprotein would encapsidate genomic RNA and then shut off translation. Functionally, targets the polyprotein to the plasma membrane via a multipartite membrane-binding signal, that includes its myristoylated N-terminus. Matrix protein is part of the pre-integration complex. Implicated in the release from host cell mediated by Vpu. Binds to RNA. Forms the conical core that encapsulates the genomic RNA-nucleocapsid complex in the virion. Most core are conical, with only 7% tubular. The core is constituted by capsid protein hexamer subunits. The core is disassembled soon after virion entry. Host restriction factors such as TRIM5-alpha or TRIMCyp bind retroviral capsids and cause premature capsid disassembly, leading to blocks in reverse transcription. Capsid restriction by TRIM5 is one of the factors which restricts HIV-1 to the human species. Host PIN1 apparently facilitates the virion uncoating. On the other hand, interactions with PDZD8 or CYPA stabilize the capsid. Its function is as follows. Encapsulates and protects viral dimeric unspliced genomic RNA (gRNA). Binds these RNAs through its zinc fingers. Acts as a nucleic acid chaperone which is involved in rearangement of nucleic acid secondary structure during gRNA retrotranscription. Also facilitates template switch leading to recombination. As part of the polyprotein, participates in gRNA dimerization, packaging, tRNA incorporation and virion assembly. In terms of biological role, aspartyl protease that mediates proteolytic cleavages of Gag and Gag-Pol polyproteins during or shortly after the release of the virion from the plasma membrane. Cleavages take place as an ordered, step-wise cascade to yield mature proteins. This process is called maturation. Displays maximal activity during the budding process just prior to particle release from the cell. Also cleaves Nef and Vif, probably concomitantly with viral structural proteins on maturation of virus particles. Hydrolyzes host EIF4GI and PABP1 in order to shut off the capped cellular mRNA translation. The resulting inhibition of cellular protein synthesis serves to ensure maximal viral gene expression and to evade host immune response. Also mediates cleavage of host YTHDF3. Mediates cleavage of host CARD8, thereby activating the CARD8 inflammasome, leading to the clearance of latent HIV-1 in patient CD4(+) T-cells after viral reactivation; in contrast, HIV-1 can evade CARD8-sensing when its protease remains inactive in infected cells prior to viral budding. Functionally, multifunctional enzyme that converts the viral RNA genome into dsDNA in the cytoplasm, shortly after virus entry into the cell. This enzyme displays a DNA polymerase activity that can copy either DNA or RNA templates, and a ribonuclease H (RNase H) activity that cleaves the RNA strand of RNA-DNA heteroduplexes in a partially processive 3' to 5' endonucleasic mode. Conversion of viral genomic RNA into dsDNA requires many steps. A tRNA(3)-Lys binds to the primer-binding site (PBS) situated at the 5'-end of the viral RNA. RT uses the 3' end of the tRNA primer to perform a short round of RNA-dependent minus-strand DNA synthesis. The reading proceeds through the U5 region and ends after the repeated (R) region which is present at both ends of viral RNA. The portion of the RNA-DNA heteroduplex is digested by the RNase H, resulting in a ssDNA product attached to the tRNA primer. This ssDNA/tRNA hybridizes with the identical R region situated at the 3' end of viral RNA. This template exchange, known as minus-strand DNA strong stop transfer, can be either intra- or intermolecular. RT uses the 3' end of this newly synthesized short ssDNA to perform the RNA-dependent minus-strand DNA synthesis of the whole template. RNase H digests the RNA template except for two polypurine tracts (PPTs) situated at the 5'-end and near the center of the genome. It is not clear if both polymerase and RNase H activities are simultaneous. RNase H probably can proceed both in a polymerase-dependent (RNA cut into small fragments by the same RT performing DNA synthesis) and a polymerase-independent mode (cleavage of remaining RNA fragments by free RTs). Secondly, RT performs DNA-directed plus-strand DNA synthesis using the PPTs that have not been removed by RNase H as primers. PPTs and tRNA primers are then removed by RNase H. The 3' and 5' ssDNA PBS regions hybridize to form a circular dsDNA intermediate. Strand displacement synthesis by RT to the PBS and PPT ends produces a blunt ended, linear dsDNA copy of the viral genome that includes long terminal repeats (LTRs) at both ends. Catalyzes viral DNA integration into the host chromosome, by performing a series of DNA cutting and joining reactions. This enzyme activity takes place after virion entry into a cell and reverse transcription of the RNA genome in dsDNA. The first step in the integration process is 3' processing. This step requires a complex comprising the viral genome, matrix protein, Vpr and integrase. This complex is called the pre-integration complex (PIC). The integrase protein removes 2 nucleotides from each 3' end of the viral DNA, leaving recessed CA OH's at the 3' ends. In the second step, the PIC enters cell nucleus. This process is mediated through integrase and Vpr proteins, and allows the virus to infect a non dividing cell. This ability to enter the nucleus is specific of lentiviruses, other retroviruses cannot and rely on cell division to access cell chromosomes. In the third step, termed strand transfer, the integrase protein joins the previously processed 3' ends to the 5' ends of strands of target cellular DNA at the site of integration. The 5'-ends are produced by integrase-catalyzed staggered cuts, 5 bp apart. A Y-shaped, gapped, recombination intermediate results, with the 5'-ends of the viral DNA strands and the 3' ends of target DNA strands remaining unjoined, flanking a gap of 5 bp. The last step is viral DNA integration into host chromosome. This involves host DNA repair synthesis in which the 5 bp gaps between the unjoined strands are filled in and then ligated. Since this process occurs at both cuts flanking the HIV genome, a 5 bp duplication of host DNA is produced at the ends of HIV-1 integration. Alternatively, Integrase may catalyze the excision of viral DNA just after strand transfer, this is termed disintegration. The protein is Gag-Pol polyprotein (gag-pol) of Human immunodeficiency virus type 1 group M subtype G (isolate 92NG083) (HIV-1).